Here is an 89-residue protein sequence, read N- to C-terminus: MAPGRGVLLLICLCLMDNVSQVVCSQNSTTPSKFPTFYSYDCNADTYAPQLTSFSTIWTLLNVLVMTIACVIYLIYMCFNKFVATMTNT.

The signal sequence occupies residues 1 to 24; sequence MAPGRGVLLLICLCLMDNVSQVVC. The Virion surface portion of the chain corresponds to 25–56; it reads SQNSTTPSKFPTFYSYDCNADTYAPQLTSFST. A helical membrane pass occupies residues 57–77; the sequence is IWTLLNVLVMTIACVIYLIYM. Residues 78–89 lie on the Intravirion side of the membrane; sequence CFNKFVATMTNT.

It belongs to the herpesviridae glycoprotein N family. In terms of assembly, interacts (via N-terminus) with gM (via N-terminus). The gM-gN heterodimer forms the gCII complex.

Its subcellular location is the virion membrane. The protein resides in the host membrane. The protein localises to the host Golgi apparatus. It localises to the host trans-Golgi network. Functionally, envelope glycoprotein necessary for proper maturation of gM and modulation of its membrane fusion activity. Also plays a critical role in virion morphogenesis. This is Envelope glycoprotein N from Equine herpesvirus 2 (strain 86/87) (EHV-2).